Consider the following 155-residue polypeptide: Ribosome maturation factor RimP (155 aa).

The protein belongs to the RimP family.

Its subcellular location is the cytoplasm. Its function is as follows. Required for maturation of 30S ribosomal subunits. This is Ribosome maturation factor RimP from Prochlorococcus marinus (strain MIT 9312).